Consider the following 364-residue polypeptide: Peroxisome biogenesis protein 3-2 (364 aa).

Residues valine 15–tyrosine 32 traverse the membrane as a helical segment. The stretch at asparagine 33–alanine 62 forms a coiled coil.

The protein belongs to the peroxin-3 family.

The protein localises to the peroxisome membrane. In terms of biological role, involved in morphology determination of peroxisomes, but not in import of peroxisomal matrix proteins. May act as a docking factor for PEX19 and be necessary for the import of peroxisomal membrane proteins in the peroxisomes. This Arabidopsis thaliana (Mouse-ear cress) protein is Peroxisome biogenesis protein 3-2 (PEX3-2).